The chain runs to 185 residues: MLNSVYDAQKSDCNKALNALKRDFSTLRTGKVSVKILENIFVDYYDNQTPLNQVATVLATDATTISVTPWEKSMLKGIESAIAAANIGVNPTNDGESVKLFFPPMTTEQRKENAKKAKAMGEKAKVSIRNIRKDANDGVKKLEKDKSISEDEAKKAYDEVQKITDNFIEKIDEAVKNKEEELLKV.

This sequence belongs to the RRF family.

Its subcellular location is the cytoplasm. Functionally, responsible for the release of ribosomes from messenger RNA at the termination of protein biosynthesis. May increase the efficiency of translation by recycling ribosomes from one round of translation to another. The chain is Ribosome-recycling factor from Campylobacter hominis (strain ATCC BAA-381 / DSM 21671 / CCUG 45161 / LMG 19568 / NCTC 13146 / CH001A).